Reading from the N-terminus, the 182-residue chain is Putative manganese efflux pump MntP (182 aa).

The next 6 membrane-spanning stretches (helical) occupy residues 6–26 (LIPL…VSLG), 37–57 (ILYI…IGMV), 71–91 (HFAG…SSIL), 101–121 (IGIS…SVGL), 131–151 (VITI…GLFI), and 162–182 (YGEI…LFPI).

Belongs to the MntP (TC 9.B.29) family.

It is found in the cell membrane. Probably functions as a manganese efflux pump. The sequence is that of Putative manganese efflux pump MntP from Bacillus cereus (strain AH187).